The sequence spans 270 residues: Pyrroline-5-carboxylate reductase (270 aa).

It belongs to the pyrroline-5-carboxylate reductase family.

Its subcellular location is the cytoplasm. It catalyses the reaction L-proline + NADP(+) = (S)-1-pyrroline-5-carboxylate + NADPH + 2 H(+). The enzyme catalyses L-proline + NAD(+) = (S)-1-pyrroline-5-carboxylate + NADH + 2 H(+). The protein operates within amino-acid biosynthesis; L-proline biosynthesis; L-proline from L-glutamate 5-semialdehyde: step 1/1. Catalyzes the reduction of 1-pyrroline-5-carboxylate (PCA) to L-proline. The sequence is that of Pyrroline-5-carboxylate reductase from Corynebacterium melassecola.